We begin with the raw amino-acid sequence, 796 residues long: Transcription factor kayak (796 aa).

4 disordered regions span residues 109-132 (AYQQ…SNTS), 315-341 (VVNN…SNTV), 374-429 (FNCG…GSNG), and 442-490 (VGSA…RNKL). The segment covering 402–429 (TTDTSSAATDSTSYQNGGHMFGNNGSNG) has biased composition (low complexity). Over residues 447 to 457 (RGTSSTSNNAT) the composition is skewed to polar residues. The region spanning 478-541 (EEKRRVRRER…HQLNFVLEAH (64 aa)) is the bZIP domain. Residues 480-499 (KRRVRRERNKLAAARCRKRR) are basic motif. Residues 506 to 534 (LSEEVDGLLKKNEDLKKEIEILTNTRHQL) are leucine-zipper. The disordered stretch occupies residues 569–601 (SSGSNGSHHHNSNSNNSNNNNSNNNNNSNSNDS). Ser-621 is modified (phosphoserine). Disordered regions lie at residues 642 to 661 (PHDA…PPAA) and 774 to 796 (SSQN…LVSL).

This sequence belongs to the bZIP family. Fos subfamily. In terms of assembly, homodimer. Heterodimer with Jra. The kay-Jra heterodimer binds more stably to the AP-1 site than either of the two proteins alone.

The protein localises to the nucleus. In terms of biological role, developmentally regulated transcription factor AP-1 binds and recognizes the enhancer DNA sequence: 5'-TGA[CG]TCA-3'. May play a role in the function or determination of a particular subset of cells in the developing embryo. It is able to carry out its function either independently of or in conjunction with Jra. The protein is Transcription factor kayak of Drosophila grimshawi (Hawaiian fruit fly).